A 29-amino-acid chain; its full sequence is Cytochrome c oxidase subunit 7A2, mitochondrial (29 aa).

N6-acetyllysine is present on Lys10.

This sequence belongs to the cytochrome c oxidase VIIa family. Component of the cytochrome c oxidase (complex IV, CIV), a multisubunit enzyme composed of 14 subunits. The complex is composed of a catalytic core of 3 subunits MT-CO1, MT-CO2 and MT-CO3, encoded in the mitochondrial DNA, and 11 supernumerary subunits COX4I, COX5A, COX5B, COX6A, COX6B, COX6C, COX7A, COX7B, COX7C, COX8 and NDUFA4, which are encoded in the nuclear genome. The complex exists as a monomer or a dimer and forms supercomplexes (SCs) in the inner mitochondrial membrane with NADH-ubiquinone oxidoreductase (complex I, CI) and ubiquinol-cytochrome c oxidoreductase (cytochrome b-c1 complex, complex III, CIII), resulting in different assemblies (supercomplex SCI(1)III(2)IV(1) and megacomplex MCI(2)III(2)IV(2)). Interacts with PET100.

It localises to the mitochondrion inner membrane. Its pathway is energy metabolism; oxidative phosphorylation. In terms of biological role, component of the cytochrome c oxidase, the last enzyme in the mitochondrial electron transport chain which drives oxidative phosphorylation. The respiratory chain contains 3 multisubunit complexes succinate dehydrogenase (complex II, CII), ubiquinol-cytochrome c oxidoreductase (cytochrome b-c1 complex, complex III, CIII) and cytochrome c oxidase (complex IV, CIV), that cooperate to transfer electrons derived from NADH and succinate to molecular oxygen, creating an electrochemical gradient over the inner membrane that drives transmembrane transport and the ATP synthase. Cytochrome c oxidase is the component of the respiratory chain that catalyzes the reduction of oxygen to water. Electrons originating from reduced cytochrome c in the intermembrane space (IMS) are transferred via the dinuclear copper A center (CU(A)) of subunit 2 and heme A of subunit 1 to the active site in subunit 1, a binuclear center (BNC) formed by heme A3 and copper B (CU(B)). The BNC reduces molecular oxygen to 2 water molecules using 4 electrons from cytochrome c in the IMS and 4 protons from the mitochondrial matrix. The sequence is that of Cytochrome c oxidase subunit 7A2, mitochondrial (COX7A2) from Canis lupus familiaris (Dog).